The chain runs to 304 residues: 4-diphosphocytidyl-2-C-methyl-D-erythritol kinase (304 aa).

Residue lysine 18 is part of the active site. 103-113 is an ATP binding site; sequence PVAAGIGGGSA. The active site involves aspartate 145.

It belongs to the GHMP kinase family. IspE subfamily.

The catalysed reaction is 4-CDP-2-C-methyl-D-erythritol + ATP = 4-CDP-2-C-methyl-D-erythritol 2-phosphate + ADP + H(+). Its pathway is isoprenoid biosynthesis; isopentenyl diphosphate biosynthesis via DXP pathway; isopentenyl diphosphate from 1-deoxy-D-xylulose 5-phosphate: step 3/6. Functionally, catalyzes the phosphorylation of the position 2 hydroxy group of 4-diphosphocytidyl-2C-methyl-D-erythritol. This is 4-diphosphocytidyl-2-C-methyl-D-erythritol kinase from Rhodospirillum rubrum (strain ATCC 11170 / ATH 1.1.1 / DSM 467 / LMG 4362 / NCIMB 8255 / S1).